The sequence spans 151 residues: 3-hydroxyacyl-[acyl-carrier-protein] dehydratase FabZ (151 aa).

Residue His49 is part of the active site.

It belongs to the thioester dehydratase family. FabZ subfamily.

It is found in the cytoplasm. The enzyme catalyses a (3R)-hydroxyacyl-[ACP] = a (2E)-enoyl-[ACP] + H2O. Involved in unsaturated fatty acids biosynthesis. Catalyzes the dehydration of short chain beta-hydroxyacyl-ACPs and long chain saturated and unsaturated beta-hydroxyacyl-ACPs. The protein is 3-hydroxyacyl-[acyl-carrier-protein] dehydratase FabZ of Wolinella succinogenes (strain ATCC 29543 / DSM 1740 / CCUG 13145 / JCM 31913 / LMG 7466 / NCTC 11488 / FDC 602W) (Vibrio succinogenes).